The primary structure comprises 527 residues: Glucose-6-phosphate isomerase (527 aa).

E323 functions as the Proton donor in the catalytic mechanism. Catalysis depends on residues H352 and K454.

This sequence belongs to the GPI family.

It localises to the cytoplasm. The catalysed reaction is alpha-D-glucose 6-phosphate = beta-D-fructose 6-phosphate. It participates in carbohydrate biosynthesis; gluconeogenesis. It functions in the pathway carbohydrate degradation; glycolysis; D-glyceraldehyde 3-phosphate and glycerone phosphate from D-glucose: step 2/4. In terms of biological role, catalyzes the reversible isomerization of glucose-6-phosphate to fructose-6-phosphate. This Prochlorococcus marinus (strain MIT 9301) protein is Glucose-6-phosphate isomerase.